Reading from the N-terminus, the 295-residue chain is MEKKVGTDRVKRGMAQMQKGGVIMDVVNAEQAKIAEDAGAVAVMALERVPSDIRAAGGVARMADPRIVEEVMNAVSIPVMAKARIGHITEARVLEAMGVDYIDESEVLTPADDEFHLLKSDFTVPFVCGCRDIGEALRRIGEGAAMLRTKGEPGTGNIVEAVRHMRQVNGQIRQIVGMTDDELMVAAKNFGAPYELVKEIKSLGKLPVVNFAAGGVATPSDAALMMELGADGVFVGSGIFKSDNPAKFASAIVQATTYYTDYELIGKLSKELGSPMKGIEMSRLNPEDRMQDRSV.

Asp-25 contributes to the D-ribose 5-phosphate binding site. The active-site Schiff-base intermediate with D-ribose 5-phosphate is Lys-82. Position 154 (Gly-154) interacts with D-ribose 5-phosphate. Arg-166 serves as a coordination point for D-glyceraldehyde 3-phosphate. D-ribose 5-phosphate is bound by residues Gly-215 and 236–237 (GS).

The protein belongs to the PdxS/SNZ family. In terms of assembly, in the presence of PdxT, forms a dodecamer of heterodimers.

The enzyme catalyses aldehydo-D-ribose 5-phosphate + D-glyceraldehyde 3-phosphate + L-glutamine = pyridoxal 5'-phosphate + L-glutamate + phosphate + 3 H2O + H(+). Its pathway is cofactor biosynthesis; pyridoxal 5'-phosphate biosynthesis. Functionally, catalyzes the formation of pyridoxal 5'-phosphate from ribose 5-phosphate (RBP), glyceraldehyde 3-phosphate (G3P) and ammonia. The ammonia is provided by the PdxT subunit. Can also use ribulose 5-phosphate and dihydroxyacetone phosphate as substrates, resulting from enzyme-catalyzed isomerization of RBP and G3P, respectively. The protein is Pyridoxal 5'-phosphate synthase subunit PdxS of Listeria welshimeri serovar 6b (strain ATCC 35897 / DSM 20650 / CCUG 15529 / CIP 8149 / NCTC 11857 / SLCC 5334 / V8).